Here is a 426-residue protein sequence, read N- to C-terminus: 3-phosphoshikimate 1-carboxyvinyltransferase (426 aa).

The 3-phosphoshikimate site is built by Lys-22, Ser-23, and Arg-27. Lys-22 serves as a coordination point for phosphoenolpyruvate. Phosphoenolpyruvate contacts are provided by Gly-96 and Arg-124. 3-phosphoshikimate is bound by residues Ser-170, Ser-171, Gln-172, Ser-198, Asp-314, Asn-337, and Lys-341. Gln-172 contacts phosphoenolpyruvate. The Proton acceptor role is filled by Asp-314. Arg-345, Arg-387, and Lys-412 together coordinate phosphoenolpyruvate.

The protein belongs to the EPSP synthase family. In terms of assembly, monomer.

Its subcellular location is the cytoplasm. It carries out the reaction 3-phosphoshikimate + phosphoenolpyruvate = 5-O-(1-carboxyvinyl)-3-phosphoshikimate + phosphate. The protein operates within metabolic intermediate biosynthesis; chorismate biosynthesis; chorismate from D-erythrose 4-phosphate and phosphoenolpyruvate: step 6/7. Its function is as follows. Catalyzes the transfer of the enolpyruvyl moiety of phosphoenolpyruvate (PEP) to the 5-hydroxyl of shikimate-3-phosphate (S3P) to produce enolpyruvyl shikimate-3-phosphate and inorganic phosphate. The chain is 3-phosphoshikimate 1-carboxyvinyltransferase from Photobacterium damsela subsp. piscicida (Pasteurella piscicida).